We begin with the raw amino-acid sequence, 37 residues long: MEALVYTFLLVGTLGIIFFAIFFREPPKLPEASKSKK.

Residues 3-23 (ALVYTFLLVGTLGIIFFAIFF) traverse the membrane as a helical segment.

The protein belongs to the PsbT family. As to quaternary structure, PSII is composed of 1 copy each of membrane proteins PsbA, PsbB, PsbC, PsbD, PsbE, PsbF, PsbH, PsbI, PsbJ, PsbK, PsbL, PsbM, PsbT, PsbY, PsbZ, Psb30/Ycf12, at least 3 peripheral proteins of the oxygen-evolving complex and a large number of cofactors. It forms dimeric complexes.

The protein resides in the plastid. The protein localises to the chloroplast thylakoid membrane. Functionally, found at the monomer-monomer interface of the photosystem II (PS II) dimer, plays a role in assembly and dimerization of PSII. PSII is a light-driven water plastoquinone oxidoreductase, using light energy to abstract electrons from H(2)O, generating a proton gradient subsequently used for ATP formation. The polypeptide is Photosystem II reaction center protein T (Spirogyra maxima (Green alga)).